The sequence spans 118 residues: Cell division protein FtsB (118 aa).

Over 1–3 (MRL) the chain is Cytoplasmic. The helical transmembrane segment at 4-21 (LFLVLLVLLGLIQYPLWL) threads the bilayer. Residues 22-118 (GKGGWFKVWD…PRPPATPPRR (97 aa)) lie on the Periplasmic side of the membrane. Residues 28 to 62 (KVWDLQRQVAEQRETNDGLRARNTALEAEVRDLAT) adopt a coiled-coil conformation. A disordered region spans residues 88 to 118 (LPPGTPLPSDNSTPQASALSKPRPPATPPRR). The span at 95–105 (PSDNSTPQASA) shows a compositional bias: polar residues. Pro residues predominate over residues 109–118 (PRPPATPPRR).

This sequence belongs to the FtsB family. Part of a complex composed of FtsB, FtsL and FtsQ.

Its subcellular location is the cell inner membrane. Essential cell division protein. May link together the upstream cell division proteins, which are predominantly cytoplasmic, with the downstream cell division proteins, which are predominantly periplasmic. The chain is Cell division protein FtsB from Bordetella bronchiseptica (strain ATCC BAA-588 / NCTC 13252 / RB50) (Alcaligenes bronchisepticus).